The chain runs to 24 residues: N-acyl-L-amino acid amidohydrolase (24 aa).

The protein belongs to the peptidase M20 family. Homotetramer. It depends on Co(2+) as a cofactor.

It catalyses the reaction an N-acyl-L-amino acid + H2O = an L-alpha-amino acid + a carboxylate. The enzyme catalyses an N-acetyl-L-cysteine-S-conjugate + H2O = an S-substituted L-cysteine + acetate. In Parageobacillus thermoglucosidasius (Geobacillus thermoglucosidasius), this protein is N-acyl-L-amino acid amidohydrolase.